A 757-amino-acid chain; its full sequence is uncharacterized protein (757 aa).

An S1 motif domain is found at 640–709; it reads GMILEGVVSN…ARKRIALTMR (70 aa). Positions 710–741 are enriched in basic and acidic residues; that stretch reads LDDEPGGAKHKMPSENRSRERTAGRKPQRNDR. Positions 710-757 are disordered; that stretch reads LDDEPGGAKHKMPSENRSRERTAGRKPQRNDRAPANSAMADAFAKLKR.

This is an uncharacterized protein from Neisseria meningitidis serogroup A / serotype 4A (strain DSM 15465 / Z2491).